The primary structure comprises 189 residues: SAGA-associated factor 11 homolog (189 aa).

An SGF11-type zinc finger spans residues 94 to 115 (CTCPNCDRLVAATRFAPHLEKC). The segment at 128–189 (RRLATKEGSS…GSKKNNGKTF (62 aa)) is disordered. Residues 136 to 145 (SSASSTSTST) show a composition bias toward low complexity. Position 165 is a phosphoserine (serine 165). Positions 175–189 (NSRNNGSKKNNGKTF) are enriched in low complexity.

It belongs to the SGF11 family. Component of some SAGA transcription coactivator-HAT complexes, at least composed of Ada2b, not/nonstop, Pcaf/Gcn5, Sgf11 and Spt3. Within the SAGA complex, Sgf11, e(y)2, and not/nonstop form an additional subcomplex of SAGA called the DUB module (deubiquitination module). Interacts directly with not/nonstop. Interacts with the AMEX complex component xmas-2. Interacts with Cbp80; important for promoter recruitment of Sgf11 that is not associated with the DUB module.

It localises to the nucleus. It is found in the nucleoplasm. The protein resides in the cytoplasm. Functionally, component of the transcription regulatory histone acetylation (HAT) complex SAGA, a multiprotein complex that activates transcription by remodeling chromatin and mediating histone acetylation and deubiquitination. Within the SAGA complex, participates in a subcomplex that specifically deubiquitinates histone H2B. The SAGA complex is recruited to specific gene promoters by activators, where it is required for transcription. Required for nuclear receptor-mediated transactivation. Binds independently on SAGA to promoters in an RNA-dependent manner. Binds to mRNA and is essential for total mRNA export from the nucleus. Required to counteract heterochromatin silencing. Controls the development of neuronal connectivity in visual system by being required for accurate axon targeting in the optic lobe. Required for expression of ecdysone-induced genes such as br/broad. The sequence is that of SAGA-associated factor 11 homolog from Drosophila virilis (Fruit fly).